A 371-amino-acid chain; its full sequence is Diterpene cyclase DtcycA (371 aa).

Mg(2+) contacts are provided by N234, S238, and E242.

The protein belongs to the terpene synthase family. As to quaternary structure, homodimer. Mg(2+) serves as cofactor.

The catalysed reaction is (2E,6E,10E)-geranylgeranyl diphosphate = cembrene C + diphosphate. It catalyses the reaction (2E,6E,10E)-geranylgeranyl diphosphate + H2O = (R)-nephthenol + diphosphate. Diterpene cyclases that can form multiple diterpene products. In Streptomyces sp, this protein is Diterpene cyclase DtcycA.